Here is a 374-residue protein sequence, read N- to C-terminus: RNA polymerase sigma factor SigA (374 aa).

Residues 141–211 (LAEANLRLVV…TRAIADQART (71 aa)) form a sigma-70 factor domain-2 region. Residues 165 to 168 (DLIQ) carry the Interaction with polymerase core subunit RpoC motif. Residues 220–296 (ETINKLIRVQ…DQDATSPSDH (77 aa)) are sigma-70 factor domain-3. The interval 309–362 (VLDTLTDREENVLRLRFGLDDGRTRTLEEVGRVFGVTRERIRQIEAKALRKLRH) is sigma-70 factor domain-4. Residues 335–354 (LEEVGRVFGVTRERIRQIEA) constitute a DNA-binding region (H-T-H motif).

Belongs to the sigma-70 factor family. RpoD/SigA subfamily. Interacts transiently with the RNA polymerase catalytic core.

It is found in the cytoplasm. In terms of biological role, sigma factors are initiation factors that promote the attachment of RNA polymerase to specific initiation sites and are then released. This sigma factor is the primary sigma factor during exponential growth. The sequence is that of RNA polymerase sigma factor SigA from Listeria monocytogenes serovar 1/2a (strain ATCC BAA-679 / EGD-e).